The chain runs to 431 residues: Chaperone SurA (431 aa).

The N-terminal stretch at 1-22 (MKLWKPTLISVLSALTLFNAHA) is a signal peptide. PpiC domains are found at residues 173-271 (TVQY…KIDD) and 280-380 (VTEV…EVLD).

It localises to the periplasm. The enzyme catalyses [protein]-peptidylproline (omega=180) = [protein]-peptidylproline (omega=0). Functionally, chaperone involved in the correct folding and assembly of outer membrane proteins. Recognizes specific patterns of aromatic residues and the orientation of their side chains, which are found more frequently in integral outer membrane proteins. May act in both early periplasmic and late outer membrane-associated steps of protein maturation. In Vibrio cholerae serotype O1 (strain ATCC 39315 / El Tor Inaba N16961), this protein is Chaperone SurA.